The sequence spans 438 residues: Phospholipase D Y (438 aa).

The N-terminal stretch at 1 to 19 is a signal peptide; it reads MIINRLFIIIVLFFVNVNS. Residue Asn-50 is glycosylated (N-linked (GlcNAc...) asparagine). The 28-residue stretch at 145-172 folds into the PLD phosphodiesterase 1 domain; that stretch reads GSGVLHTKLIIIDESSAYVGSANADWSS. Catalysis depends on residues His-150, Lys-152, and Asp-157. N-linked (GlcNAc...) asparagine glycans are attached at residues Asn-223, Asn-336, and Asn-394. The region spanning 373–399 is the PLD phosphodiesterase 2 domain; sequence YTRVNHAKFMVTEKQSYVGTSNWSQDY.

The protein belongs to the phospholipase D family.

The catalysed reaction is a 1,2-diacyl-sn-glycero-3-phosphocholine + H2O = a 1,2-diacyl-sn-glycero-3-phosphate + choline + H(+). With respect to regulation, inhibited by butan-1-ol. Hydrolyzes membrane phospholipids, such as PtdCho (phosphatidylcholine), producing the free headgroup and PtdOH (phosphatidic acid; signaling molecule on its own). The sequence is that of Phospholipase D Y (pldY) from Dictyostelium discoideum (Social amoeba).